Reading from the N-terminus, the 551-residue chain is Chloride channel CLIC-like protein 1 (551 aa).

The N-terminal stretch at 1–18 (MLCSLLLCECLLLVAGYA) is a signal peptide. At 19–184 (HDDDWIDPTD…EDSFGVDPYN (166 aa)) the chain is on the lumenal side. The chain crosses the membrane as a helical span at residues 185–205 (VLMVLLCLLCIVVLVATELWT). Residues 206 to 216 (YVRWYTQLRRV) are Cytoplasmic-facing. A helical transmembrane segment spans residues 217–237 (LIISFLFSLGWNWMYLYKLAF). Residues 238–329 (AQHQAEVAKM…GEFIKALMKE (92 aa)) lie on the Lumenal side of the membrane. A helical membrane pass occupies residues 330–350 (IPALLHLPVLIIMALAILSFC). At 351–551 (YGAGKSVHVL…GQDPVSSPCG (201 aa)) the chain is on the cytoplasmic side. Residues 363–415 (IGGPESEPPQALRPRDRRRQEEIDYRPDGGAGDADFHYRGQMGPTEQGPYAKT) form a disordered region. Over residues 380–389 (RRQEEIDYRP) the composition is skewed to basic and acidic residues. Phosphoserine is present on residues S438 and S464. The tract at residues 447–551 (VPDAEAREHP…GQDPVSSPCG (105 aa)) is disordered. T482 is modified (phosphothreonine). Polar residues predominate over residues 488-508 (TESSQSAKPVSGQDTSGNTEG). 3 positions are modified to phosphoserine: S509, S524, and S532.

The protein belongs to the chloride channel MCLC family. In terms of assembly, homomultimers. Interacts with mitochondrial protein PIGBOS1 (via C-terminus); the interaction occurs at the mitochondria-associated endoplasmic reticulum (ER) membrane, a zone of contact between the ER and mitochondrial membranes, but does not appear to play a role in ER-mitochondria tethering and is not affected by ER stress. Interacts with CALR. As to expression, expressed in the retina of the eye, with extensive expression in the lamina cribrosa, optic nerve, ganglion cell layer, inner nuclear layer, outer nuclear layer and retinal pigment epithelium.

The protein localises to the endoplasmic reticulum membrane. The enzyme catalyses chloride(in) = chloride(out). It carries out the reaction bromide(in) = bromide(out). It catalyses the reaction nitrate(in) = nitrate(out). The catalysed reaction is fluoride(in) = fluoride(out). With respect to regulation, inhibited by ER lumenal Ca(2+). Functionally, anion-selective channel with Ca(2+)-dependent and voltage-independent gating. Permeable to small monovalent anions with selectivity for bromide &gt; chloride &gt; nitrate &gt; fluoride. Operates in the endoplasmic reticulum (ER) membrane where it mediates chloride efflux to compensate for the loss of positive charges from the ER lumen upon Ca(2+) release. Contributes to the maintenance of ER Ca(2+) pools and activation of unfolded protein response to prevent accumulation of misfolded proteins in the ER lumen. Particularly involved in ER homeostasis mechanisms underlying motor neurons and retinal photoreceptors survival. In Homo sapiens (Human), this protein is Chloride channel CLIC-like protein 1.